The following is a 545-amino-acid chain: Calcium-binding mitochondrial carrier SAL1 (545 aa).

Positions 11 to 46 (QRDIRYACLFKELDVKGNGQVTLDNLISAFEKNDHP) constitute an EF-hand 1 domain. Lysine 65, aspartate 70, aspartate 93, aspartate 95, aspartate 97, lysine 99, and glutamate 104 together coordinate Ca(2+). 3 consecutive EF-hand domains span residues 80–115 (NAES…LDNQ), 120–155 (NELN…RGQA), and 156–191 (SHKK…VPRK). The Ca(2+) site is built by threonine 161 and serine 166. 3 Solcar repeats span residues 225–332 (IRGF…TKKI), 345–434 (LSKF…LKKW), and 452–541 (LSNL…LKKF). 6 helical membrane-spanning segments follow: residues 231–248 (FIAG…TAPF), 307–326 (GNGL…FGSF), 355–368 (GLAG…VYPI), 409–428 (GVTV…LGTF), 458–475 (LPMG…VYPI), and 516–535 (GLVP…YLCY).

Belongs to the mitochondrial carrier (TC 2.A.29) family.

The protein resides in the mitochondrion inner membrane. Functionally, calcium-dependent mitochondrial solute carrier. This chain is Calcium-binding mitochondrial carrier SAL1 (SAL1), found in Saccharomyces cerevisiae (Baker's yeast).